The chain runs to 514 residues: Probable cytosol aminopeptidase (514 aa).

Residues K266 and D271 each contribute to the Mn(2+) site. Residue K278 is part of the active site. D289, D357, and E359 together coordinate Mn(2+). Residue R361 is part of the active site.

Belongs to the peptidase M17 family. Requires Mn(2+) as cofactor.

Its subcellular location is the cytoplasm. The enzyme catalyses Release of an N-terminal amino acid, Xaa-|-Yaa-, in which Xaa is preferably Leu, but may be other amino acids including Pro although not Arg or Lys, and Yaa may be Pro. Amino acid amides and methyl esters are also readily hydrolyzed, but rates on arylamides are exceedingly low.. It carries out the reaction Release of an N-terminal amino acid, preferentially leucine, but not glutamic or aspartic acids.. In terms of biological role, presumably involved in the processing and regular turnover of intracellular proteins. Catalyzes the removal of unsubstituted N-terminal amino acids from various peptides. The sequence is that of Probable cytosol aminopeptidase from Oleidesulfovibrio alaskensis (strain ATCC BAA-1058 / DSM 17464 / G20) (Desulfovibrio alaskensis).